Here is a 122-residue protein sequence, read N- to C-terminus: Large ribosomal subunit protein uL14c (122 aa).

This sequence belongs to the universal ribosomal protein uL14 family. As to quaternary structure, part of the 50S ribosomal subunit.

It is found in the plastid. It localises to the chloroplast. Binds to 23S rRNA. The chain is Large ribosomal subunit protein uL14c from Pinus koraiensis (Korean pine).